We begin with the raw amino-acid sequence, 181 residues long: Large ribosomal subunit protein bL19 (181 aa).

Residues 162–173 are compositionally biased toward basic and acidic residues; sequence EKKAAAEAEAAK. Residues 162–181 are disordered; it reads EKKAAAEAEAAKAAEATPAE.

This sequence belongs to the bacterial ribosomal protein bL19 family.

In terms of biological role, this protein is located at the 30S-50S ribosomal subunit interface and may play a role in the structure and function of the aminoacyl-tRNA binding site. This is Large ribosomal subunit protein bL19 from Mesorhizobium japonicum (strain LMG 29417 / CECT 9101 / MAFF 303099) (Mesorhizobium loti (strain MAFF 303099)).